Reading from the N-terminus, the 192-residue chain is Probable nicotinate-nucleotide adenylyltransferase (192 aa).

It belongs to the NadD family.

The enzyme catalyses nicotinate beta-D-ribonucleotide + ATP + H(+) = deamido-NAD(+) + diphosphate. Its pathway is cofactor biosynthesis; NAD(+) biosynthesis; deamido-NAD(+) from nicotinate D-ribonucleotide: step 1/1. Catalyzes the reversible adenylation of nicotinate mononucleotide (NaMN) to nicotinic acid adenine dinucleotide (NaAD). The polypeptide is Probable nicotinate-nucleotide adenylyltransferase (Shouchella clausii (strain KSM-K16) (Alkalihalobacillus clausii)).